The chain runs to 354 residues: Probable L-ascorbate-6-phosphate lactonase UlaG (354 aa).

This sequence belongs to the UlaG family. The cofactor is a divalent metal cation.

The protein localises to the cytoplasm. It catalyses the reaction L-ascorbate 6-phosphate + H2O = 3-dehydro-L-gulonate 6-phosphate. Its pathway is cofactor degradation; L-ascorbate degradation; D-xylulose 5-phosphate from L-ascorbate: step 1/4. Probably catalyzes the hydrolysis of L-ascorbate-6-P into 3-keto-L-gulonate-6-P. Is essential for L-ascorbate utilization under anaerobic conditions. The sequence is that of Probable L-ascorbate-6-phosphate lactonase UlaG from Escherichia coli O45:K1 (strain S88 / ExPEC).